A 734-amino-acid polypeptide reads, in one-letter code: Photosystem I P700 chlorophyll a apoprotein A2 (734 aa).

8 consecutive transmembrane segments (helical) span residues 46–69, 135–158, 175–199, 273–291, 330–353, 369–395, 417–439, and 517–535; these read IFASHLGQLAIIFLWTSGNLFHVA, LYTGAFSLLIVSTLFLVAGWLHLE, LNHHLSGLFGVSSLARAGHLVHVAI, IAHHHLAIAVVFIIAGHTY, LHFQLGLALASLGVVTSLVAQHMY, AALYTHHQYIAGFIMTGAFAHGAIFLT, AIISHLSWASLFLGFHTLGLYVH, and FPVHHAIASGLHTTTLILS. Residues C559 and C568 each contribute to the [4Fe-4S] cluster site. The next 2 membrane-spanning stretches (helical) occupy residues 575-596 and 643-665; these read AFYPAVFWMLNTIGWVTLHWHW and LSVWAWMFSFGHLVWATGFMFLI. Residues H654, M662, and Y670 each coordinate chlorophyll a. W671 contacts phylloquinone. A helical transmembrane segment spans residues 707 to 727; that stretch reads LVGLAHFSVGYIFTYAAFPIP.

Belongs to the PsaA/PsaB family. As to quaternary structure, the PsaA/B heterodimer binds the P700 chlorophyll special pair and subsequent electron acceptors. PSI consists of a core antenna complex that captures photons, and an electron transfer chain that converts photonic excitation into a charge separation. The eukaryotic PSI reaction center is composed of at least 11 subunits. P700 is a chlorophyll a/chlorophyll a' dimer, A0 is one or more chlorophyll a, A1 is one or both phylloquinones and FX is a shared 4Fe-4S iron-sulfur center. serves as cofactor.

Its subcellular location is the plastid. The protein resides in the chloroplast thylakoid membrane. It catalyses the reaction reduced [plastocyanin] + hnu + oxidized [2Fe-2S]-[ferredoxin] = oxidized [plastocyanin] + reduced [2Fe-2S]-[ferredoxin]. PsaA and PsaB bind P700, the primary electron donor of photosystem I (PSI), as well as the electron acceptors A0, A1 and FX. PSI is a plastocyanin-ferredoxin oxidoreductase, converting photonic excitation into a charge separation, which transfers an electron from the donor P700 chlorophyll pair to the spectroscopically characterized acceptors A0, A1, FX, FA and FB in turn. Oxidized P700 is reduced on the lumenal side of the thylakoid membrane by plastocyanin. This Selaginella uncinata (Blue spike-moss) protein is Photosystem I P700 chlorophyll a apoprotein A2.